A 122-amino-acid chain; its full sequence is Zein-alpha B49 (122 aa).

This sequence belongs to the zein family.

Zeins are major seed storage proteins. This chain is Zein-alpha B49, found in Zea mays (Maize).